Here is a 177-residue protein sequence, read N- to C-terminus: Large ribosomal subunit protein uL5 (177 aa).

Belongs to the universal ribosomal protein uL5 family. In terms of assembly, part of the 50S ribosomal subunit; part of the 5S rRNA/L5/L18/L25 subcomplex. Contacts the 5S rRNA and the P site tRNA. Forms a bridge to the 30S subunit in the 70S ribosome.

In terms of biological role, this is one of the proteins that bind and probably mediate the attachment of the 5S RNA into the large ribosomal subunit, where it forms part of the central protuberance. In the 70S ribosome it contacts protein S13 of the 30S subunit (bridge B1b), connecting the 2 subunits; this bridge is implicated in subunit movement. Contacts the P site tRNA; the 5S rRNA and some of its associated proteins might help stabilize positioning of ribosome-bound tRNAs. The chain is Large ribosomal subunit protein uL5 from Neorickettsia sennetsu (strain ATCC VR-367 / Miyayama) (Ehrlichia sennetsu).